A 184-amino-acid polypeptide reads, in one-letter code: GTP cyclohydrolase 1 (184 aa).

Zn(2+) is bound by residues Cys75, His78, and Cys146.

It belongs to the GTP cyclohydrolase I family. Toroid-shaped homodecamer, composed of two pentamers of five dimers.

The enzyme catalyses GTP + H2O = 7,8-dihydroneopterin 3'-triphosphate + formate + H(+). It functions in the pathway cofactor biosynthesis; 7,8-dihydroneopterin triphosphate biosynthesis; 7,8-dihydroneopterin triphosphate from GTP: step 1/1. This Pseudoalteromonas translucida (strain TAC 125) protein is GTP cyclohydrolase 1.